Consider the following 290-residue polypeptide: OTU domain-containing protein 6A (290 aa).

Positions Gln-27–Ala-117 are disordered. The span at Ser-49–Glu-68 shows a compositional bias: basic and acidic residues. The span at Lys-95 to Arg-108 shows a compositional bias: basic residues. Positions Leu-142–Ile-276 constitute an OTU domain. A cys-loop region spans residues Ile-147–Cys-153. Residue Asp-150 is part of the active site. Cys-153 acts as the Nucleophile in catalysis. A variable-loop region spans residues Ile-211 to Leu-221. Residues Tyr-259–His-269 form a his-loop region. His-269 is an active-site residue.

The catalysed reaction is Thiol-dependent hydrolysis of ester, thioester, amide, peptide and isopeptide bonds formed by the C-terminal Gly of ubiquitin (a 76-residue protein attached to proteins as an intracellular targeting signal).. Deubiquitinating enzyme that hydrolyzes 'Lys-27'-, 'Lys-29'- and 'Lys-33'-linked polyubiquitin chains. Also able to hydrolyze 'Lys-11'-linked ubiquitin chains. The polypeptide is OTU domain-containing protein 6A (Otud6a) (Mus musculus (Mouse)).